The sequence spans 225 residues: NAD(P)H-quinone oxidoreductase subunit K, chloroplastic (225 aa).

The [4Fe-4S] cluster site is built by Cys43, Cys44, Cys108, and Cys139.

The protein belongs to the complex I 20 kDa subunit family. NDH is composed of at least 16 different subunits, 5 of which are encoded in the nucleus. The cofactor is [4Fe-4S] cluster.

The protein resides in the plastid. Its subcellular location is the chloroplast thylakoid membrane. The enzyme catalyses a plastoquinone + NADH + (n+1) H(+)(in) = a plastoquinol + NAD(+) + n H(+)(out). It catalyses the reaction a plastoquinone + NADPH + (n+1) H(+)(in) = a plastoquinol + NADP(+) + n H(+)(out). Its function is as follows. NDH shuttles electrons from NAD(P)H:plastoquinone, via FMN and iron-sulfur (Fe-S) centers, to quinones in the photosynthetic chain and possibly in a chloroplast respiratory chain. The immediate electron acceptor for the enzyme in this species is believed to be plastoquinone. Couples the redox reaction to proton translocation, and thus conserves the redox energy in a proton gradient. This Barbarea verna (Land cress) protein is NAD(P)H-quinone oxidoreductase subunit K, chloroplastic.